The following is a 301-amino-acid chain: N-acetylmuramic acid 6-phosphate etherase (301 aa).

An SIS domain is found at 57–220 (TYEKMLFGGR…STSLMIKKGK (164 aa)). The Proton donor role is filled by Glu-85. Glu-116 is an active-site residue.

This sequence belongs to the GCKR-like family. MurNAc-6-P etherase subfamily. Homodimer.

The catalysed reaction is N-acetyl-D-muramate 6-phosphate + H2O = N-acetyl-D-glucosamine 6-phosphate + (R)-lactate. It participates in amino-sugar metabolism; N-acetylmuramate degradation. Its function is as follows. Specifically catalyzes the cleavage of the D-lactyl ether substituent of MurNAc 6-phosphate, producing GlcNAc 6-phosphate and D-lactate. The sequence is that of N-acetylmuramic acid 6-phosphate etherase from Clostridium botulinum (strain Eklund 17B / Type B).